Consider the following 267-residue polypeptide: Distal basal body ring component protein (267 aa).

Positions 1-29 are cleaved as a signal peptide; sequence MKAFLFAAAATLVITALSAPAFAGTPVTL.

In terms of assembly, flaD is a subunit of the flagellar transenvelope basal body.

Its subcellular location is the periplasm. It is found in the bacterial flagellum basal body. FlaD might be the structural protein of the distal basal body ring P, or it is necessary for the assembly of the P ring. In Caulobacter vibrioides (strain ATCC 19089 / CIP 103742 / CB 15) (Caulobacter crescentus), this protein is Distal basal body ring component protein (flaD).